Consider the following 636-residue polypeptide: Fructose-1,6-bisphosphatase class 3 (636 aa).

It belongs to the FBPase class 3 family. Mn(2+) serves as cofactor.

The catalysed reaction is beta-D-fructose 1,6-bisphosphate + H2O = beta-D-fructose 6-phosphate + phosphate. Its pathway is carbohydrate biosynthesis; gluconeogenesis. The polypeptide is Fructose-1,6-bisphosphatase class 3 (Streptococcus sanguinis (strain SK36)).